The chain runs to 504 residues: Glutamate--tRNA ligase (504 aa).

The 'HIGH' region motif lies at 25 to 35; that stretch reads PSPTGNPHVGL. 4 residues coordinate Zn(2+): C122, C124, C149, and E151. Positions 270 to 274 match the 'KMSKS' region motif; sequence KLSKR. K273 lines the ATP pocket.

Belongs to the class-I aminoacyl-tRNA synthetase family. Glutamate--tRNA ligase type 1 subfamily. As to quaternary structure, monomer. Zn(2+) serves as cofactor.

It is found in the cytoplasm. It carries out the reaction tRNA(Glu) + L-glutamate + ATP = L-glutamyl-tRNA(Glu) + AMP + diphosphate. Catalyzes the attachment of glutamate to tRNA(Glu) in a two-step reaction: glutamate is first activated by ATP to form Glu-AMP and then transferred to the acceptor end of tRNA(Glu). The protein is Glutamate--tRNA ligase of Streptomyces avermitilis (strain ATCC 31267 / DSM 46492 / JCM 5070 / NBRC 14893 / NCIMB 12804 / NRRL 8165 / MA-4680).